Consider the following 427-residue polypeptide: Acyl-CoA hydrolase 2 (427 aa).

15 to 83 is an a nucleoside 3',5'-cyclic phosphate binding site; sequence LLQKLPSSSL…FLLKQYDYFG (69 aa). Residues D337, S359, and Q409 each act as charge relay system in the active site. Residues 425–427 carry the Microbody targeting signal motif; it reads SKL.

This sequence belongs to the C/M/P thioester hydrolase family. Homotetramer. As to expression, mostly expressed in leaves and flowers, and, to a lower extent, in seedlings and siliques.

Its subcellular location is the peroxisome matrix. The enzyme catalyses a fatty acyl-CoA + H2O = a fatty acid + CoA + H(+). It carries out the reaction dodecanoyl-CoA + H2O = dodecanoate + CoA + H(+). It catalyses the reaction tetradecanoyl-CoA + H2O = tetradecanoate + CoA + H(+). The catalysed reaction is octadecanoyl-CoA + H2O = octadecanoate + CoA + H(+). The enzyme catalyses (9Z)-hexadecenoyl-CoA + H2O = (9Z)-hexadecenoate + CoA + H(+). It carries out the reaction (5Z,8Z,11Z,14Z)-eicosatetraenoyl-CoA + H2O = (5Z,8Z,11Z,14Z)-eicosatetraenoate + CoA + H(+). It catalyses the reaction hexadecanoyl-CoA + H2O = hexadecanoate + CoA + H(+). The catalysed reaction is (9Z)-octadecenoyl-CoA + H2O = (9Z)-octadecenoate + CoA + H(+). The enzyme catalyses (9Z,12Z)-octadecadienoyl-CoA + H2O = (9Z,12Z)-octadecadienoate + CoA + H(+). It functions in the pathway lipid metabolism; fatty acid metabolism. With respect to regulation, insensitive to feedback inhibition by free coenzyme A (CoASH). Its function is as follows. Catalyzes the hydrolysis of acyl-CoAs into free fatty acids and coenzyme A (CoASH), regulating their respective intracellular levels. Active with both medium chain and long chain acyl-CoAs (e.g. 12:0-CoA, 14:0-CoA, 16:0-CoA, 18:0-CoA, 16:1-CoA, 18:1-CoA, 18:2-CoA and 20:4-CoA) as substrates, palmitoleoyl-CoA (16:1-CoA) being the favorite substrate. In Arabidopsis thaliana (Mouse-ear cress), this protein is Acyl-CoA hydrolase 2.